The chain runs to 30 residues: GLKDMIKNLAKEAAVKLAGAVINRFSPQPQ.

Expressed by the skin glands.

Its subcellular location is the secreted. Its function is as follows. Probably has antibacterial activity. The sequence is that of Nattererin-2 from Physalaemus nattereri (Cuyaba dwarf frog).